The following is an 899-amino-acid chain: Proline-rich transmembrane protein 4 (899 aa).

The first 23 residues, 1–23, serve as a signal peptide directing secretion; it reads MARHGCLGLGLFCCVLFAATVGP. 2 disordered regions span residues 110 to 152 and 295 to 340; these read LTEW…RRST and TVPI…PEAP. Transmembrane regions (helical) follow at residues 370–390, 392–412, 430–450, 467–487, and 500–520; these read VGAL…LLPW, CPPG…AGTT, ALAW…GLGL, LAAL…GSAA, and GLHA…SCWG. At S641 the chain carries Phosphoserine. 2 disordered regions span residues 769-797 and 839-869; these read TGGR…AWPA and PSGS…ASEL. Low complexity predominate over residues 840–851; that stretch reads SGSSPSLPASGS.

The protein localises to the membrane. In Homo sapiens (Human), this protein is Proline-rich transmembrane protein 4 (PRRT4).